A 324-amino-acid chain; its full sequence is Cathepsin L-like proteinase (324 aa).

The signal sequence occupies residues methionine 1–alanine 16. 3 disulfides stabilise this stretch: cysteine 131–cysteine 174, cysteine 165–cysteine 206, and cysteine 263–cysteine 312. The active site involves cysteine 134. Catalysis depends on residues histidine 270 and asparagine 290.

It belongs to the peptidase C1 family. Expressed in larval carcasses and gut, and adult gut.

This is Cathepsin L-like proteinase from Phaedon cochleariae (Mustard beetle).